The sequence spans 358 residues: Uroporphyrinogen decarboxylase (358 aa).

Residues 29–33 (RQAGR), Phe48, Asp79, Tyr155, Ser210, and His330 contribute to the substrate site.

It belongs to the uroporphyrinogen decarboxylase family. Homodimer.

The protein resides in the cytoplasm. It catalyses the reaction uroporphyrinogen III + 4 H(+) = coproporphyrinogen III + 4 CO2. The protein operates within porphyrin-containing compound metabolism; protoporphyrin-IX biosynthesis; coproporphyrinogen-III from 5-aminolevulinate: step 4/4. Its function is as follows. Catalyzes the decarboxylation of four acetate groups of uroporphyrinogen-III to yield coproporphyrinogen-III. This chain is Uroporphyrinogen decarboxylase, found in Bordetella pertussis (strain Tohama I / ATCC BAA-589 / NCTC 13251).